The sequence spans 651 residues: Tudor domain-containing protein 3 (651 aa).

Residues 147-189 form a disordered region; sequence TKTFGGGGGGVRSHLNIGAGGHRNREVSQKEKASKSESKNEGV. The span at 169 to 189 shows a compositional bias: basic and acidic residues; sequence RNREVSQKEKASKSESKNEGV. Residues 193 to 233 enclose the UBA domain; it reads LVDEKALKHITEMGFSKEASRQALMDNANNLEAALNVLLNS. Disordered regions lie at residues 234–272, 306–371, and 384–459; these read SKQK…APST, TEQN…DVWA, and YDRT…RKSR. A Phosphoserine modification is found at serine 256. Positions 321–338 are enriched in basic and acidic residues; sequence PRNDPRQPRNEKPPRFQR. Positions 339-352 are enriched in polar residues; sequence DTPNLKSALENSVL. Position 345 is a phosphoserine (serine 345). Lysine 470 is covalently cross-linked (Glycyl lysine isopeptide (Lys-Gly) (interchain with G-Cter in SUMO2)). The Tudor domain maps to 555–615; it reads MWKPGDECFA…KPVQTEAWEE (61 aa). Basic and acidic residues predominate over residues 624–633; the sequence is EFRRGGDGQP. The interval 624 to 651 is disordered; the sequence is EFRRGGDGQPRRSTRPTQQFYQPPRARN. Residues 631 to 651 form an EBM motif; may mediate interaction with the EJC region; sequence GQPRRSTRPTQQFYQPPRARN.

As to quaternary structure, component of mRNA stress granules. Interacts with FMR1, FXR1, FXR2, EWSR1, FUS, SERBP1, EEF1A1 and DDX3X or DDX3Y, and with the small nuclear ribonucleoprotein-associated proteins SNRPB and SNRPN. Interacts with 'Lys-48'-linked tetra-ubiquitin, but not with monoubiquitin or 'Lys-63'-linked ubiquitin chains. May interact with the exon junction complex (EJC) composed at least of CASC3, EIF4A3, MAGOH and RBM8A. Interacts with POLR2A (via the C-terminal domain (CTD)).

Its subcellular location is the cytoplasm. The protein localises to the nucleus. Functionally, scaffolding protein that specifically recognizes and binds dimethylarginine-containing proteins. Plays a role in the regulation of translation of target mRNAs by binding Arg/Gly-rich motifs (GAR) in dimethylarginine-containing proteins. In nucleus, acts as a coactivator: recognizes and binds asymmetric dimethylation on the core histone tails associated with transcriptional activation (H3R17me2a and H4R3me2a) and recruits proteins at these arginine-methylated loci. In cytoplasm, acts as an antiviral factor that participates in the assembly of stress granules together with G3BP1. This Rattus norvegicus (Rat) protein is Tudor domain-containing protein 3 (Tdrd3).